The sequence spans 78 residues: Large ribosomal subunit protein bL28 (78 aa).

Residues 1-28 are disordered; it reads MSAYCQVTGRKPGFGKQVSHSHRHTSRR.

The protein belongs to the bacterial ribosomal protein bL28 family.

The polypeptide is Large ribosomal subunit protein bL28 (Corynebacterium urealyticum (strain ATCC 43042 / DSM 7109)).